The chain runs to 1183 residues: Polyphosphatidylinositol phosphatase INP52 (1183 aa).

Residues 133 to 153 (PPSISTHSSRSSLRSSSSRSL) are compositionally biased toward low complexity. Residues 133-161 (PPSISTHSSRSSLRSSSSRSLNAQEQAPK) form a disordered region. S152 is subject to Phosphoserine. Residues 167–507 (LRKLLSNGSF…GDQISQIYTG (341 aa)) enclose the SAC domain. Position 522 is a phosphoserine (S522). Low complexity predominate over residues 955–968 (SPLLSGPSPQPSVV). Positions 955–1183 (SPLLSGPSPQ…VHPLKPCDPN (229 aa)) are disordered. A phosphoserine mark is found at S1005 and S1016. T1032 bears the Phosphothreonine mark. Composition is skewed to polar residues over residues 1046–1057 (KPVSLQKSSSEL), 1082–1100 (STAP…VSTT), and 1130–1145 (KLNT…SPSN). S1095 is subject to Phosphoserine.

It belongs to the synaptojanin family. This sequence in the central section; belongs to the inositol 1,4,5-trisphosphate 5-phosphatase family. In terms of assembly, interacts (via SAC domain) with BSP1; the interaction is direct. Interacts with ABP1.

The protein resides in the cytoplasm. Its subcellular location is the cytoskeleton. The protein localises to the actin patch. The catalysed reaction is a 1,2-diacyl-sn-glycero-3-phospho-(1D-myo-inositol-4,5-bisphosphate) + H2O = a 1,2-diacyl-sn-glycero-3-phospho-(1D-myo-inositol 4-phosphate) + phosphate. Dephosphorylates a number of phosphatidylinositols (PIs) like phosphatidylinositol 4,5-bisphosphate (PtdIns(4,5)P2), but also phosphatidylinositol 3-phosphate (PtdIns(3)P), phosphatidylinositol 4-phosphate (PtdIns(4)P), and phosphatidylinositol 3,5-bisphosphate (PtdIns(3,5)P2). Controls the cellular levels and subcellular distribution of phosphatidylinositol 3-phosphate and phosphatidylinositol 4,5-bisphosphate. Specifically functions within the early endocytic pathway and actin organization. This is Polyphosphatidylinositol phosphatase INP52 from Saccharomyces cerevisiae (strain ATCC 204508 / S288c) (Baker's yeast).